The sequence spans 75 residues: Penaeidin-3m (75 aa).

The N-terminal stretch at 1–19 (MRLVVCLVFLASFALVCQG) is a signal peptide. The residue at position 20 (glutamine 20) is a Pyrrolidone carboxylic acid. Cystine bridges form between cysteine 44–cysteine 59, cysteine 48–cysteine 66, and cysteine 60–cysteine 67. Serine 74 is subject to Serine amide.

Belongs to the penaeidin family.

It localises to the cytoplasmic granule. In terms of biological role, antibacterial and antifungal activity. Presents chitin-binding activity. This chain is Penaeidin-3m, found in Penaeus setiferus (Atlantic white shrimp).